Consider the following 226-residue polypeptide: ATP synthase F(0) complex subunit a (226 aa).

6 consecutive transmembrane segments (helical) span residues 12-32 (PTMM…ILFP), 68-88 (WALM…LGLL), 97-117 (QLSM…ITGF), 138-158 (IPML…ALAV), 164-184 (ITAG…LMNI), and 200-222 (TILE…SLYL).

The protein belongs to the ATPase A chain family. In terms of assembly, component of the ATP synthase complex composed at least of ATP5F1A/subunit alpha, ATP5F1B/subunit beta, ATP5MC1/subunit c (homooctomer), MT-ATP6/subunit a, MT-ATP8/subunit 8, ATP5ME/subunit e, ATP5MF/subunit f, ATP5MG/subunit g, ATP5MK/subunit k, ATP5MJ/subunit j, ATP5F1C/subunit gamma, ATP5F1D/subunit delta, ATP5F1E/subunit epsilon, ATP5PF/subunit F6, ATP5PB/subunit b, ATP5PD/subunit d, ATP5PO/subunit OSCP. ATP synthase complex consists of a soluble F(1) head domain (subunits alpha(3) and beta(3)) - the catalytic core - and a membrane F(0) domain - the membrane proton channel (subunits c, a, 8, e, f, g, k and j). These two domains are linked by a central stalk (subunits gamma, delta, and epsilon) rotating inside the F1 region and a stationary peripheral stalk (subunits F6, b, d, and OSCP). Interacts with DNAJC30; interaction is direct.

The protein localises to the mitochondrion inner membrane. It catalyses the reaction H(+)(in) = H(+)(out). Subunit a, of the mitochondrial membrane ATP synthase complex (F(1)F(0) ATP synthase or Complex V) that produces ATP from ADP in the presence of a proton gradient across the membrane which is generated by electron transport complexes of the respiratory chain. ATP synthase complex consist of a soluble F(1) head domain - the catalytic core - and a membrane F(1) domain - the membrane proton channel. These two domains are linked by a central stalk rotating inside the F(1) region and a stationary peripheral stalk. During catalysis, ATP synthesis in the catalytic domain of F(1) is coupled via a rotary mechanism of the central stalk subunits to proton translocation. With the subunit c (ATP5MC1), forms the proton-conducting channel in the F(0) domain, that contains two crucial half-channels (inlet and outlet) that facilitate proton movement from the mitochondrial intermembrane space (IMS) into the matrix. Protons are taken up via the inlet half-channel and released through the outlet half-channel, following a Grotthuss mechanism. The chain is ATP synthase F(0) complex subunit a from Felis catus (Cat).